A 98-amino-acid polypeptide reads, in one-letter code: Gibberellin-regulated protein 1 (98 aa).

An N-terminal signal peptide occupies residues 1-23 (MAISKALIASLLISLLVLQLVQA).

Belongs to the GASA family. Six disulfide bonds may be present. In terms of tissue distribution, expressed in flower buds, style, stamen filaments, vasculature of sepals, flower abscission zone and green siliques. Lower levels seen in the root phloem, cotyledons and vasculature of rosette leaves.

It is found in the secreted. Functionally, gibberellin-regulated protein that may function in hormonal controlled steps of development such as seed germination, flowering and seed maturation. This chain is Gibberellin-regulated protein 1 (GASA1), found in Arabidopsis thaliana (Mouse-ear cress).